Reading from the N-terminus, the 263-residue chain is Proteasome subunit beta type-4 (263 aa).

Methionine 1 carries the N-acetylmethionine modification. Positions 1–44 are excised as a propeptide; sequence MEAFWESRTGHWAGGPAPGQFYRVPSTPSCLMDPMSAPARPITR. At serine 26 the chain carries Phosphoserine. The residue at position 101 (tyrosine 101) is a Phosphotyrosine.

The protein belongs to the peptidase T1B family. The 26S proteasome consists of a 20S proteasome core and two 19S regulatory subunits. The 20S proteasome core is a barrel-shaped complex made of 28 subunits that are arranged in four stacked rings. The two outer rings are each formed by seven alpha subunits, and the two inner rings are formed by seven beta subunits. The proteolytic activity is exerted by three beta-subunits PSMB5, PSMB6 and PSMB7. Forms a ternary complex with SMAD1 and OAZ1 before PSMB4 is incorporated into the 20S proteasome. Interacts with PRPF19.

The protein resides in the cytoplasm. The protein localises to the nucleus. In terms of biological role, non-catalytic component of the 20S core proteasome complex involved in the proteolytic degradation of most intracellular proteins. This complex plays numerous essential roles within the cell by associating with different regulatory particles. Associated with two 19S regulatory particles, forms the 26S proteasome and thus participates in the ATP-dependent degradation of ubiquitinated proteins. The 26S proteasome plays a key role in the maintenance of protein homeostasis by removing misfolded or damaged proteins that could impair cellular functions, and by removing proteins whose functions are no longer required. Associated with the PA200 or PA28, the 20S proteasome mediates ubiquitin-independent protein degradation. This type of proteolysis is required in several pathways including spermatogenesis (20S-PA200 complex) or generation of a subset of MHC class I-presented antigenic peptides (20S-PA28 complex). SMAD1/OAZ1/PSMB4 complex mediates the degradation of the CREBBP/EP300 repressor SNIP1. The sequence is that of Proteasome subunit beta type-4 (Psmb4) from Rattus norvegicus (Rat).